A 217-amino-acid chain; its full sequence is Somatotropin (217 aa).

Positions 1–24 are cleaved as a signal peptide; that stretch reads MAAGSWTSLLLAFTLLCLPQLREA. Residue His-44 participates in Zn(2+) binding. Cysteines 79 and 191 form a disulfide. At Ser-132 the chain carries Phosphoserine. Glu-200 provides a ligand contact to Zn(2+). A disulfide bridge links Cys-208 with Cys-215.

It belongs to the somatotropin/prolactin family.

The protein resides in the secreted. In terms of biological role, plays an important role in growth control. Its major role in stimulating body growth is to stimulate the liver and other tissues to secrete IGF1. It stimulates both the differentiation and proliferation of myoblasts. It also stimulates amino acid uptake and protein synthesis in muscle and other tissues. The protein is Somatotropin (GH1) of Callithrix jacchus (White-tufted-ear marmoset).